A 364-amino-acid polypeptide reads, in one-letter code: DNA replication and repair protein RecF (364 aa).

30 to 37 (GNNGMGKT) is an ATP binding site.

Belongs to the RecF family.

It is found in the cytoplasm. Functionally, the RecF protein is involved in DNA metabolism; it is required for DNA replication and normal SOS inducibility. RecF binds preferentially to single-stranded, linear DNA. It also seems to bind ATP. This is DNA replication and repair protein RecF from Porphyromonas gingivalis (strain ATCC BAA-308 / W83).